We begin with the raw amino-acid sequence, 279 residues long: Thioredoxin-like 1-2, chloroplastic (279 aa).

Residues Met1 to Arg34 constitute a chloroplast transit peptide. One can recognise a Thioredoxin domain in the interval Pro61 to Pro203. Residues Cys126 and Cys129 each act as nucleophile in the active site. Cysteines 126 and 129 form a disulfide. Residues Gly242–Arg279 are disordered.

Belongs to the thioredoxin family.

It is found in the plastid. The protein resides in the chloroplast. Functionally, probable thiol-disulfide oxidoreductase that may participate in various redox reactions. The protein is Thioredoxin-like 1-2, chloroplastic of Oryza sativa subsp. japonica (Rice).